The following is a 397-amino-acid chain: Succinate--CoA ligase [ADP-forming] subunit beta (397 aa).

One can recognise an ATP-grasp domain in the interval 9–254 (KALLAQYGAP…ETEEDPKELA (246 aa)). ATP contacts are provided by residues lysine 46, 53-55 (GRG), glutamate 109, serine 112, and glutamate 117. Residues asparagine 209 and aspartate 223 each contribute to the Mg(2+) site. Residues asparagine 274 and 331-333 (GIM) each bind substrate.

The protein belongs to the succinate/malate CoA ligase beta subunit family. As to quaternary structure, heterotetramer of two alpha and two beta subunits. The cofactor is Mg(2+).

The catalysed reaction is succinate + ATP + CoA = succinyl-CoA + ADP + phosphate. It carries out the reaction GTP + succinate + CoA = succinyl-CoA + GDP + phosphate. The protein operates within carbohydrate metabolism; tricarboxylic acid cycle; succinate from succinyl-CoA (ligase route): step 1/1. Functionally, succinyl-CoA synthetase functions in the citric acid cycle (TCA), coupling the hydrolysis of succinyl-CoA to the synthesis of either ATP or GTP and thus represents the only step of substrate-level phosphorylation in the TCA. The beta subunit provides nucleotide specificity of the enzyme and binds the substrate succinate, while the binding sites for coenzyme A and phosphate are found in the alpha subunit. The sequence is that of Succinate--CoA ligase [ADP-forming] subunit beta from Jannaschia sp. (strain CCS1).